Reading from the N-terminus, the 295-residue chain is MEIRRRPPNPTVRVENLEYAVPHREAQAKNILEEIVWHKDIEIKNFKKIVSLEDLIKKIENLPTPKDFYKNILESKIKPGVIAEIKKASPSKGVIRKDFNPENIAICYEGLGASCISVLTDKKFFQGSYEILETVRKSTNLPLLCKDFIISAYQIYKARVSGADAILLIAAILSDDDLIYLKKIADNLKMSVLVEVHNSYELERILKLKSFNLIGINNRDLKTFKTDLKTSKELMNTYADIFLKQNIIPISESGINCAEDLESLRSIGIMGVLIGETFMRETDIEQSFKKLFNSI.

It belongs to the TrpC family.

It catalyses the reaction 1-(2-carboxyphenylamino)-1-deoxy-D-ribulose 5-phosphate + H(+) = (1S,2R)-1-C-(indol-3-yl)glycerol 3-phosphate + CO2 + H2O. The protein operates within amino-acid biosynthesis; L-tryptophan biosynthesis; L-tryptophan from chorismate: step 4/5. This Prochlorococcus marinus (strain AS9601) protein is Indole-3-glycerol phosphate synthase.